Consider the following 154-residue polypeptide: Myoglobin (154 aa).

The Globin domain maps to 2-148 (GLSDGEWQLV…FRNDMAAKYK (147 aa)). Position 4 is a phosphoserine (Ser4). Residue His65 coordinates nitrite. His65 contributes to the O2 binding site. Thr68 carries the post-translational modification Phosphothreonine. His94 contacts heme b.

It belongs to the globin family. Monomeric.

The protein resides in the cytoplasm. The protein localises to the sarcoplasm. The catalysed reaction is Fe(III)-heme b-[protein] + nitric oxide + H2O = Fe(II)-heme b-[protein] + nitrite + 2 H(+). It carries out the reaction H2O2 + AH2 = A + 2 H2O. Monomeric heme protein which primary function is to store oxygen and facilitate its diffusion within muscle tissues. Reversibly binds oxygen through a pentacoordinated heme iron and enables its timely and efficient release as needed during periods of heightened demand. Depending on the oxidative conditions of tissues and cells, and in addition to its ability to bind oxygen, it also has a nitrite reductase activity whereby it regulates the production of bioactive nitric oxide. Under stress conditions, like hypoxia and anoxia, it also protects cells against reactive oxygen species thanks to its pseudoperoxidase activity. The protein is Myoglobin (MB) of Saimiri sciureus (Common squirrel monkey).